A 158-amino-acid polypeptide reads, in one-letter code: Protein hunchback (158 aa).

A compositionally biased stretch (basic residues) spans 18 to 34; it reads HNHHHHHHHGHHQHQQR. Disordered regions lie at residues 18–96 and 118–158; these read HNHH…TTTA and LTPP…KYMA. Residues 41–50 are compositionally biased toward polar residues; the sequence is ASSPHQSPLP. A compositionally biased stretch (low complexity) spans 52–65; that stretch reads LQLEQYLKQQQQQP. Residues 139-158 are compositionally biased toward basic and acidic residues; that stretch reads EPEKEHDLMSNSSEDMKYMA.

It belongs to the hunchback C2H2-type zinc-finger protein family.

It localises to the nucleus. In terms of biological role, gap class segmentation protein that controls development of head structures. This is Protein hunchback (hb) from Drosophila mimica (Fruit fly).